The primary structure comprises 880 residues: Alanine--tRNA ligase (880 aa).

Zn(2+) contacts are provided by His-566, His-570, Cys-668, and His-672.

This sequence belongs to the class-II aminoacyl-tRNA synthetase family. Requires Zn(2+) as cofactor.

The protein localises to the cytoplasm. The enzyme catalyses tRNA(Ala) + L-alanine + ATP = L-alanyl-tRNA(Ala) + AMP + diphosphate. Its function is as follows. Catalyzes the attachment of alanine to tRNA(Ala) in a two-step reaction: alanine is first activated by ATP to form Ala-AMP and then transferred to the acceptor end of tRNA(Ala). Also edits incorrectly charged Ser-tRNA(Ala) and Gly-tRNA(Ala) via its editing domain. In Alkaliphilus oremlandii (strain OhILAs) (Clostridium oremlandii (strain OhILAs)), this protein is Alanine--tRNA ligase.